An 87-amino-acid chain; its full sequence is uncharacterized protein (87 aa).

This is an uncharacterized protein from Bacillus subtilis (strain 168).